The chain runs to 485 residues: Probable cobyric acid synthase (485 aa).

One can recognise a GATase cobBQ-type domain in the interval 250-435 (EIEIAVIRLP…LHGLFDNKNI (186 aa)). Residue Cys-328 is the Nucleophile of the active site. The active site involves His-427.

It belongs to the CobB/CobQ family. CobQ subfamily.

It functions in the pathway cofactor biosynthesis; adenosylcobalamin biosynthesis. Functionally, catalyzes amidations at positions B, D, E, and G on adenosylcobyrinic A,C-diamide. NH(2) groups are provided by glutamine, and one molecule of ATP is hydrogenolyzed for each amidation. This Methanosarcina barkeri (strain Fusaro / DSM 804) protein is Probable cobyric acid synthase.